The sequence spans 430 residues: Tol-Pal system protein TolB (430 aa).

The N-terminal stretch at 1-21 is a signal peptide; it reads MKQALRVAFGFLMLWAAVLHA.

The protein belongs to the TolB family. The Tol-Pal system is composed of five core proteins: the inner membrane proteins TolA, TolQ and TolR, the periplasmic protein TolB and the outer membrane protein Pal. They form a network linking the inner and outer membranes and the peptidoglycan layer.

It localises to the periplasm. Functionally, part of the Tol-Pal system, which plays a role in outer membrane invagination during cell division and is important for maintaining outer membrane integrity. TolB occupies a key intermediary position in the Tol-Pal system because it communicates directly with both membrane-embedded components, Pal in the outer membrane and TolA in the inner membrane. The protein is Tol-Pal system protein TolB of Salmonella choleraesuis (strain SC-B67).